The sequence spans 767 residues: 5-methyltetrahydropteroyltriglutamate--homocysteine methyltransferase (767 aa).

Residues 17–20 (RELK) and Lys117 contribute to the 5-methyltetrahydropteroyltri-L-glutamate site. Residues 441–443 (IGS) and Glu494 each bind L-homocysteine. Residues 441 to 443 (IGS) and Glu494 contribute to the L-methionine site. 5-methyltetrahydropteroyltri-L-glutamate contacts are provided by residues 525–526 (RC) and Trp571. L-homocysteine is bound at residue Asp609. Asp609 lines the L-methionine pocket. Glu615 lines the 5-methyltetrahydropteroyltri-L-glutamate pocket. 3 residues coordinate Zn(2+): His652, Cys654, and Glu676. The active-site Proton donor is the His705. Cys737 contacts Zn(2+).

This sequence belongs to the vitamin-B12 independent methionine synthase family. Zn(2+) is required as a cofactor.

The catalysed reaction is 5-methyltetrahydropteroyltri-L-glutamate + L-homocysteine = tetrahydropteroyltri-L-glutamate + L-methionine. Its pathway is amino-acid biosynthesis; L-methionine biosynthesis via de novo pathway; L-methionine from L-homocysteine (MetE route): step 1/1. In terms of biological role, catalyzes the transfer of a methyl group from 5-methyltetrahydrofolate to homocysteine resulting in methionine formation. This Bifidobacterium longum (strain NCC 2705) protein is 5-methyltetrahydropteroyltriglutamate--homocysteine methyltransferase.